Consider the following 293-residue polypeptide: Protease HtpX homolog (293 aa).

2 helical membrane passes run 4–24 and 40–60; these read IFLFIVTNLAVMVVLSATLRV and SLLILSVVIGFTGAIISLLIS. Zn(2+) is bound at residue His-146. The active site involves Glu-147. His-150 provides a ligand contact to Zn(2+). 2 helical membrane-spanning segments follow: residues 161 to 181 and 197 to 217; these read LIQGVVNTFVVFLARVVGYFI and FITVLVCEIIFGLLASIIVAW. Glu-223 is a binding site for Zn(2+).

This sequence belongs to the peptidase M48B family. The cofactor is Zn(2+).

The protein localises to the cell inner membrane. This Bordetella petrii (strain ATCC BAA-461 / DSM 12804 / CCUG 43448) protein is Protease HtpX homolog.